Reading from the N-terminus, the 62-residue chain is Rhodotorucin-A peptides type 1 (62 aa).

The propeptide occupies 1–3; that stretch reads MVA. Cysteine 14 is lipidated: S-farnesyl cysteine. The propeptide occupies 15–18; sequence TVSK. Residue cysteine 29 is the site of S-farnesyl cysteine attachment. A propeptide spanning residues 30-33 is cleaved from the precursor; it reads TVSK. A lipid anchor (S-farnesyl cysteine) is attached at cysteine 44. The propeptide occupies 45 to 48; the sequence is TVSK. The S-farnesyl cysteine moiety is linked to residue cysteine 59. Residues 60 to 62 constitute a propeptide that is removed on maturation; that stretch reads TVA.

It is found in the cell membrane. In terms of biological role, rhodotorucin-A is a mating pheromone in cells of mating type A of Rhodosporidium toruloides. This is Rhodotorucin-A peptides type 1 (RHA1) from Rhodotorula toruloides (Yeast).